Here is a 319-residue protein sequence, read N- to C-terminus: Molybdenum cofactor biosynthesis bifunctional protein (319 aa).

Residues 1 to 145 form a molybdenum cofactor biosynthesis protein C region; that stretch reads MIDVGDKAVT…GKSGHWQRPA (145 aa). Residues 61–63 and 99–100 contribute to the substrate site; these read LCH and ME. D114 is a catalytic residue. The tract at residues 146–319 is molybdenum cofactor biosynthesis protein B; it reads IAPDVAPTGA…KGADHGTVKG (174 aa).

In the N-terminal section; belongs to the MoaC family. This sequence in the C-terminal section; belongs to the MoaB/Mog family.

The enzyme catalyses (8S)-3',8-cyclo-7,8-dihydroguanosine 5'-triphosphate = cyclic pyranopterin phosphate + diphosphate. The protein operates within cofactor biosynthesis; molybdopterin biosynthesis. Functionally, catalyzes the conversion of (8S)-3',8-cyclo-7,8-dihydroguanosine 5'-triphosphate to cyclic pyranopterin monophosphate (cPMP). The chain is Molybdenum cofactor biosynthesis bifunctional protein (moaCB) from Synechococcus elongatus (strain ATCC 33912 / PCC 7942 / FACHB-805) (Anacystis nidulans R2).